The chain runs to 312 residues: Glutaminase (312 aa).

Substrate-binding residues include serine 67, asparagine 118, glutamate 162, asparagine 169, tyrosine 193, tyrosine 245, and valine 263.

Belongs to the glutaminase family. Homotetramer.

The catalysed reaction is L-glutamine + H2O = L-glutamate + NH4(+). The chain is Glutaminase from Bordetella avium (strain 197N).